The following is a 454-amino-acid chain: tRNA modification GTPase MnmE (454 aa).

Residues Arg-23, Glu-80, and Lys-120 each contribute to the (6S)-5-formyl-5,6,7,8-tetrahydrofolate site. A TrmE-type G domain is found at 216–377; it reads GMKVVIAGRP…LRNHLKQSMG (162 aa). Asn-226 provides a ligand contact to K(+). GTP is bound by residues 226 to 231, 245 to 251, 270 to 273, 335 to 338, and 358 to 360; these read NAGKSS, TDIAGTT, DTAG, NKAD, and SAR. Residue Ser-230 coordinates Mg(2+). Residues Thr-245, Ile-247, and Thr-250 each contribute to the K(+) site. Thr-251 lines the Mg(2+) pocket. Lys-454 provides a ligand contact to (6S)-5-formyl-5,6,7,8-tetrahydrofolate.

It belongs to the TRAFAC class TrmE-Era-EngA-EngB-Septin-like GTPase superfamily. TrmE GTPase family. Homodimer. Heterotetramer of two MnmE and two MnmG subunits. It depends on K(+) as a cofactor.

It is found in the cytoplasm. In terms of biological role, exhibits a very high intrinsic GTPase hydrolysis rate. Involved in the addition of a carboxymethylaminomethyl (cmnm) group at the wobble position (U34) of certain tRNAs, forming tRNA-cmnm(5)s(2)U34. The polypeptide is tRNA modification GTPase MnmE (Escherichia coli O127:H6 (strain E2348/69 / EPEC)).